The chain runs to 193 residues: Dirigent protein 11 (193 aa).

The signal sequence occupies residues 1 to 33 (MLQITNMATPFLLLLLPLIFSTVLLLTITVTQS). N-linked (GlcNAc...) asparagine glycosylation is found at Asn78 and Asn136.

The protein belongs to the plant dirigent protein family. In terms of assembly, homodimer.

It is found in the secreted. The protein resides in the extracellular space. Its subcellular location is the apoplast. Functionally, dirigent proteins impart stereoselectivity on the phenoxy radical-coupling reaction, yielding optically active lignans from two molecules of coniferyl alcohol in the biosynthesis of lignans, flavonolignans, and alkaloids and thus plays a central role in plant secondary metabolism. The protein is Dirigent protein 11 (DIR11) of Arabidopsis thaliana (Mouse-ear cress).